The chain runs to 297 residues: ATP synthase gamma chain (297 aa).

Belongs to the ATPase gamma chain family. In terms of assembly, F-type ATPases have 2 components, CF(1) - the catalytic core - and CF(0) - the membrane proton channel. CF(1) has five subunits: alpha(3), beta(3), gamma(1), delta(1), epsilon(1). CF(0) has three main subunits: a, b and c.

The protein localises to the cell membrane. Its function is as follows. Produces ATP from ADP in the presence of a proton gradient across the membrane. The gamma chain is believed to be important in regulating ATPase activity and the flow of protons through the CF(0) complex. This Beutenbergia cavernae (strain ATCC BAA-8 / DSM 12333 / CCUG 43141 / JCM 11478 / NBRC 16432 / NCIMB 13614 / HKI 0122) protein is ATP synthase gamma chain.